Consider the following 215-residue polypeptide: tRNA (guanine-N(7)-)-methyltransferase (215 aa).

S-adenosyl-L-methionine contacts are provided by glutamate 44, glutamate 69, aspartate 96, and aspartate 118. Aspartate 118 is a catalytic residue. Residues lysine 122, aspartate 154, and 191–194 (TEYE) each bind substrate.

It belongs to the class I-like SAM-binding methyltransferase superfamily. TrmB family.

The catalysed reaction is guanosine(46) in tRNA + S-adenosyl-L-methionine = N(7)-methylguanosine(46) in tRNA + S-adenosyl-L-homocysteine. Its pathway is tRNA modification; N(7)-methylguanine-tRNA biosynthesis. Catalyzes the formation of N(7)-methylguanine at position 46 (m7G46) in tRNA. The sequence is that of tRNA (guanine-N(7)-)-methyltransferase from Exiguobacterium sp. (strain ATCC BAA-1283 / AT1b).